Here is a 798-residue protein sequence, read N- to C-terminus: MEQRWGLLRKVQQWSPRPSQTIYRRVEGPQLENLEEEDREEGEELPAQFCPMELKGPERLGSCPGRSIPIPWAAAGRKAAPYLVLTTLLIFTGAFLLGYVAFRGSCQACGDSVLVVGEDVNSEDSSRGTLYWSDLQDMFLRFLGEGRMEDTIRLTSLRERVAGSARMATLVQDILDKLSRQKLDHVWTDTHYVGLQFPDPAHPNTLHWVGADGSVQEQLPLEDPEVYCPYSATGNATGKLVYAHYGRREDLQDLKAKDVELAGSLLLVRAGITSFAQKVAIAQDFGAHGVLIYPDPADFSQDPHKPGLSSDRAVYGHVHLGTGDPYTPGFPSFNQTQFPPVESSGLPNIPAQPISADVADRLLRKLTGPVAPQEWKGRLSDSPYRLGPGPGLRLVVNNHRTSTPISNIFACIEGFAEPDHYVVIGAQRDAWGPGAAKSAVGTAILLELVRTFSSMVSSGFRPRRSLLFISWDGGDFGSVGATEWLEGYLSVLHLKAVVYVSLDNSVLGDGKFHAKTSPLLVSLIENILKQVDSPNHSGQTLYDQVAFTHPSWDAEVIQPLPMDSSAYSFTAFAGVPAVEFSFMEDDRVYPFLHTKEDTYENLHKMLRGRLPAVVLAVAQLAGQLLIRLSHDHLLPLDFGRYGDVVLRHIGNLNEFSGDLKARGLTLQWVYSARGDYIRAAEKLRKEIYSSEQSDERLMRMYNVRIMRVEFYFLSQYVSPADSPFRHIFLGQGDHTLGALVEHLRMLRSDGSGAASSGLSPGLGFQESRFRRQLALLTWTLQGAANALSGDVWNIDNNF.

The Cytoplasmic portion of the chain corresponds to 1–81 (MEQRWGLLRK…WAAAGRKAAP (81 aa)). An Endocytosis signal motif is present at residues 23–26 (YRRV). A disordered region spans residues 25–44 (RVEGPQLENLEEEDREEGEE). Residues 33–44 (NLEEEDREEGEE) are compositionally biased toward acidic residues. Residues 82 to 102 (YLVLTTLLIFTGAFLLGYVAF) traverse the membrane as a helical; Signal-anchor for type II membrane protein segment. The Extracellular portion of the chain corresponds to 103-798 (RGSCQACGDS…GDVWNIDNNF (696 aa)). Residues N235, N334, and N535 are each glycosylated (N-linked (GlcNAc...) asparagine).

The protein belongs to the peptidase M28 family. M28B subfamily. Homodimer.

The protein localises to the cell membrane. Functionally, mediates cellular uptake of transferrin-bound iron in a non-iron dependent manner. May be involved in iron metabolism, hepatocyte function and erythrocyte differentiation. The polypeptide is Transferrin receptor protein 2 (Tfr2) (Rattus norvegicus (Rat)).